We begin with the raw amino-acid sequence, 640 residues long: Rab proteins geranylgeranyltransferase component A (640 aa).

2 disordered regions span residues 414 to 439 (DILG…NNNN) and 594 to 640 (HNEN…EMEL). Low complexity predominate over residues 419 to 439 (NNNNNNNNNNNNNNNNNNNNN). Over residues 604–624 (IDSDEDEDEDINDMNDNEEED) the composition is skewed to acidic residues.

Belongs to the Rab GDI family.

Substrate-binding subunit (component A) of the Rab geranylgeranyltransferase (GGTase) complex. Binds unprenylated Rab proteins and presents the substrate peptide to the catalytic component B. The component A is thought to be regenerated by transferring its prenylated Rab back to the donor membrane. The sequence is that of Rab proteins geranylgeranyltransferase component A (MRS6) from Candida albicans (Yeast).